The chain runs to 101 residues: Small ribosomal subunit protein uS10 (101 aa).

It belongs to the universal ribosomal protein uS10 family. In terms of assembly, part of the 30S ribosomal subunit.

Involved in the binding of tRNA to the ribosomes. This Flavobacterium psychrophilum (strain ATCC 49511 / DSM 21280 / CIP 103535 / JIP02/86) protein is Small ribosomal subunit protein uS10.